We begin with the raw amino-acid sequence, 463 residues long: Glutamate--tRNA ligase 1 (463 aa).

The short motif at 10–20 (PSPTGYLHIGG) is the 'HIGH' region element. Residues 238-242 (KLSKR) carry the 'KMSKS' region motif. Position 241 (Lys-241) interacts with ATP.

This sequence belongs to the class-I aminoacyl-tRNA synthetase family. Glutamate--tRNA ligase type 1 subfamily. Monomer.

Its subcellular location is the cytoplasm. It carries out the reaction tRNA(Glu) + L-glutamate + ATP = L-glutamyl-tRNA(Glu) + AMP + diphosphate. Catalyzes the attachment of glutamate to tRNA(Glu) in a two-step reaction: glutamate is first activated by ATP to form Glu-AMP and then transferred to the acceptor end of tRNA(Glu). The protein is Glutamate--tRNA ligase 1 of Helicobacter pylori (strain P12).